A 103-amino-acid chain; its full sequence is c-Myc-binding protein (103 aa).

It belongs to the AMY1 family. As to quaternary structure, binds via its C-terminal region to the N-terminal region of MYC. Associates with AKAP1/S-AKAP84. Interacts with MYCBPAP. Interacts with CFAP91.

It is found in the cytoplasm. The protein localises to the nucleus. Functionally, may control the transcriptional activity of MYC. Stimulates the activation of E box-dependent transcription by MYC. The polypeptide is c-Myc-binding protein (Mycbp) (Mus musculus (Mouse)).